A 571-amino-acid chain; its full sequence is Proline--tRNA ligase (571 aa).

It belongs to the class-II aminoacyl-tRNA synthetase family. ProS type 1 subfamily. Homodimer.

Its subcellular location is the cytoplasm. The enzyme catalyses tRNA(Pro) + L-proline + ATP = L-prolyl-tRNA(Pro) + AMP + diphosphate. In terms of biological role, catalyzes the attachment of proline to tRNA(Pro) in a two-step reaction: proline is first activated by ATP to form Pro-AMP and then transferred to the acceptor end of tRNA(Pro). As ProRS can inadvertently accommodate and process non-cognate amino acids such as alanine and cysteine, to avoid such errors it has two additional distinct editing activities against alanine. One activity is designated as 'pretransfer' editing and involves the tRNA(Pro)-independent hydrolysis of activated Ala-AMP. The other activity is designated 'posttransfer' editing and involves deacylation of mischarged Ala-tRNA(Pro). The misacylated Cys-tRNA(Pro) is not edited by ProRS. The sequence is that of Proline--tRNA ligase from Ectopseudomonas mendocina (strain ymp) (Pseudomonas mendocina).